A 140-amino-acid polypeptide reads, in one-letter code: Nucleoside diphosphate kinase (140 aa).

Lysine 11, phenylalanine 59, arginine 87, threonine 93, arginine 104, and asparagine 114 together coordinate ATP. Histidine 117 (pros-phosphohistidine intermediate) is an active-site residue.

Belongs to the NDK family. As to quaternary structure, homotetramer. Requires Mg(2+) as cofactor.

The protein localises to the cytoplasm. The catalysed reaction is a 2'-deoxyribonucleoside 5'-diphosphate + ATP = a 2'-deoxyribonucleoside 5'-triphosphate + ADP. It catalyses the reaction a ribonucleoside 5'-diphosphate + ATP = a ribonucleoside 5'-triphosphate + ADP. In terms of biological role, major role in the synthesis of nucleoside triphosphates other than ATP. The ATP gamma phosphate is transferred to the NDP beta phosphate via a ping-pong mechanism, using a phosphorylated active-site intermediate. The polypeptide is Nucleoside diphosphate kinase (Methylocella silvestris (strain DSM 15510 / CIP 108128 / LMG 27833 / NCIMB 13906 / BL2)).